The chain runs to 187 residues: MILPINTYSDPVLAMKAKPLKGVDSAIEELIAEMFDTMYKAPGIGLAAPQVGHSLRLVVVDISTIKEYADFKPMVVINPRIVAVRGRSLMEEGCLSVPGIAGNVVRPSAITLHYRDEKFEEHTADFHSMMARVLQHEIDHLDGTLFVDRMDKRDRRKIQKELDAIAEGRVKADYPLARDVNRVEAEA.

Positions 94 and 136 each coordinate Fe cation. Residue E137 is part of the active site. Residue H140 coordinates Fe cation.

Belongs to the polypeptide deformylase family. Requires Fe(2+) as cofactor.

It catalyses the reaction N-terminal N-formyl-L-methionyl-[peptide] + H2O = N-terminal L-methionyl-[peptide] + formate. Functionally, removes the formyl group from the N-terminal Met of newly synthesized proteins. Requires at least a dipeptide for an efficient rate of reaction. N-terminal L-methionine is a prerequisite for activity but the enzyme has broad specificity at other positions. The chain is Peptide deformylase from Chlorobaculum tepidum (strain ATCC 49652 / DSM 12025 / NBRC 103806 / TLS) (Chlorobium tepidum).